The sequence spans 714 residues: Elongation factor G-like protein (714 aa).

Residues 21 to 289 (GGVRNVVLVG…VATRGFPSPM (269 aa)) enclose the tr-type G domain. Positions 30–37 (GPSGGGKT) are G1. Residue 30–37 (GPSGGGKT) participates in GTP binding. The segment at 73–77 (QRSVG) is G2. The segment at 94–97 (DTPG) is G3. GTP is bound by residues 94–98 (DTPGY) and 148–151 (TKLD). Residues 148–151 (TKLD) form a G4 region. The interval 267-269 (CSS) is G5.

The protein belongs to the TRAFAC class translation factor GTPase superfamily. Classic translation factor GTPase family. EF-G/EF-2 subfamily.

This is Elongation factor G-like protein from Mycobacterium tuberculosis (strain CDC 1551 / Oshkosh).